We begin with the raw amino-acid sequence, 133 residues long: Protein Wnt-4 (133 aa).

S1 carries O-palmitoleoyl serine; by PORCN lipidation. 2 disulfides stabilise this stretch: C69/C114 and C99/C109. N100 is a glycosylation site (N-linked (GlcNAc...) asparagine).

This sequence belongs to the Wnt family. Palmitoleoylation is required for efficient binding to frizzled receptors. Depalmitoleoylation leads to Wnt signaling pathway inhibition.

The protein resides in the secreted. It localises to the extracellular space. Its subcellular location is the extracellular matrix. In terms of biological role, ligand for members of the frizzled family of seven transmembrane receptors. Plays an important role in embryonic development. The chain is Protein Wnt-4 (WNT-4) from Strongylocentrotus purpuratus (Purple sea urchin).